A 119-amino-acid chain; its full sequence is Large ribosomal subunit protein bL20 (119 aa).

It belongs to the bacterial ribosomal protein bL20 family.

Functionally, binds directly to 23S ribosomal RNA and is necessary for the in vitro assembly process of the 50S ribosomal subunit. It is not involved in the protein synthesizing functions of that subunit. In Halalkalibacterium halodurans (strain ATCC BAA-125 / DSM 18197 / FERM 7344 / JCM 9153 / C-125) (Bacillus halodurans), this protein is Large ribosomal subunit protein bL20.